Here is a 335-residue protein sequence, read N- to C-terminus: Protein BRASSINAZOLE-RESISTANT 2 (335 aa).

Over residues 1 to 19 (MTSDGATSTSAAAAAAAMA) the composition is skewed to low complexity. Disordered regions lie at residues 1 to 40 (MTSDGATSTSAAAAAAAMATRRKPSWRERENNRRRERRRR), 85 to 122 (TYRKGHKPLPGDMAGSSSRATPYSSHNQSPLSSTFDSP), and 164 to 190 (PPLRISNSAPVTPPVSSPTSRNPKPLP). Residues 22–103 (RKPSWREREN…PGDMAGSSSR (82 aa)) form a required for DNA-binding region. Over residues 99 to 120 (GSSSRATPYSSHNQSPLSSTFD) the composition is skewed to polar residues. At T175 the chain carries Phosphothreonine. A PEST-like region spans residues 231-251 (HAPATIPECDESDSSTVDSGH).

Belongs to the BZR/LAT61 family. As to quaternary structure, interacts with ASK7/BIN2 through its C-terminal domain and with the bHLH transcription factors BIM1, BIM2 and BIM3 through its C- and N-terminal domains. Interacts (via N-terminus) with REF6 and ELF6. Interacts with MYB30. Interacts with IWS1. Interacts with ASHH2/SDG8. Binds to MYB56 when dephosphorylated in the nucleus of quiescent center (QC) cells. Binds to WRKY46, WRKY54 and WRKY70 to cooperatively regulate the expression of target genes. In terms of processing, phosphorylated by ASK7/BIN2. Phosphorylation increases protein degradation and/or interferes with the nuclear localization. In terms of tissue distribution, ubiquitously expressed in cotyledons, leaves, hypocotyls and roots.

It localises to the nucleus. The protein resides in the cytoplasm. In terms of biological role, positive regulator of brassinosteroid (BR) signaling. Transcription factor that activates target gene expression by binding specifically to the DNA sequence 5'-CANNTG-3'(E box) through its N-terminal domain. Can bind individually to the promoter as a homodimer or synergistically as a heterodimer with BIM1, BIM2 or BIM3. The C-terminal domain is probably involved in transcriptional activation. Recruits the transcription elongation factor IWS1 to control BR-regulated gene expression. Forms a trimeric complex with IWS1 and ASHH2/SDG8 to regulate BR-regulated gene expression. Promotes quiescent center (QC) self-renewal by cell divisions in the primary root. Binds to the E-boxes of the BRAVO promoter to repress its expression. The polypeptide is Protein BRASSINAZOLE-RESISTANT 2 (Arabidopsis thaliana (Mouse-ear cress)).